A 266-amino-acid polypeptide reads, in one-letter code: Ribosomal RNA small subunit methyltransferase J (266 aa).

S-adenosyl-L-methionine-binding positions include 109–110, 125–126, and Asp-185; these read RD and ER.

Belongs to the methyltransferase superfamily. RsmJ family.

The protein localises to the cytoplasm. It carries out the reaction guanosine(1516) in 16S rRNA + S-adenosyl-L-methionine = N(2)-methylguanosine(1516) in 16S rRNA + S-adenosyl-L-homocysteine + H(+). Its function is as follows. Specifically methylates the guanosine in position 1516 of 16S rRNA. The sequence is that of Ribosomal RNA small subunit methyltransferase J from Cellvibrio japonicus (strain Ueda107) (Pseudomonas fluorescens subsp. cellulosa).